Reading from the N-terminus, the 888-residue chain is Bifunctional uridylyltransferase/uridylyl-removing enzyme (888 aa).

Residues 1-338 are uridylyltransferase; that stretch reads MIITSPLLDY…LPNYERKIEE (338 aa). A disordered region spans residues 182 to 204; sequence EQAKRHAQHNNTESNLEPDIKNA. Residues 339 to 699 are uridylyl-removing; sequence INENFKLVDG…AHRQSAQDAV (361 aa). The HD domain maps to 457–579; that stretch reads VDAHTLLLIR…LGDMEHLDYL (123 aa). 2 consecutive ACT domains span residues 700–781 and 809–887; these read QIFI…GLMQ and MVEI…IVSQ.

Belongs to the GlnD family. It depends on Mg(2+) as a cofactor.

The catalysed reaction is [protein-PII]-L-tyrosine + UTP = [protein-PII]-uridylyl-L-tyrosine + diphosphate. The enzyme catalyses [protein-PII]-uridylyl-L-tyrosine + H2O = [protein-PII]-L-tyrosine + UMP + H(+). Uridylyltransferase (UTase) activity is inhibited by glutamine, while glutamine activates uridylyl-removing (UR) activity. Modifies, by uridylylation and deuridylylation, the PII regulatory proteins (GlnB and homologs), in response to the nitrogen status of the cell that GlnD senses through the glutamine level. Under low glutamine levels, catalyzes the conversion of the PII proteins and UTP to PII-UMP and PPi, while under higher glutamine levels, GlnD hydrolyzes PII-UMP to PII and UMP (deuridylylation). Thus, controls uridylylation state and activity of the PII proteins, and plays an important role in the regulation of nitrogen assimilation and metabolism. In Acinetobacter baylyi (strain ATCC 33305 / BD413 / ADP1), this protein is Bifunctional uridylyltransferase/uridylyl-removing enzyme.